A 255-amino-acid chain; its full sequence is Small ribosomal subunit protein uS10m (255 aa).

The N-terminal 32 residues, 1 to 32 (MALPAARSALSARAFIRPAAALNAAASSSRYL), are a transit peptide targeting the mitochondrion. Disordered regions lie at residues 30 to 52 (RYLSTTTPRHDAPVATTPGNSET) and 220 to 255 (SEGEGEDQAEGVQKIVDAAREEKPAEKLKEEEAKSS). A compositionally biased stretch (basic and acidic residues) spans 236-255 (DAAREEKPAEKLKEEEAKSS).

Belongs to the universal ribosomal protein uS10 family. Part of the mitochondrial small ribosomal subunit.

It localises to the mitochondrion. Its function is as follows. Involved in mitochondrial genome encoded proteins translation. Involved in the binding of tRNA to the ribosomes. The protein is Small ribosomal subunit protein uS10m (RSM10) of Cryptococcus neoformans var. neoformans serotype D (strain B-3501A) (Filobasidiella neoformans).